Consider the following 134-residue polypeptide: uncharacterized protein (134 aa).

Residues Met1 to Ala26 form the signal peptide. Residues Gly77–Asp98 form a disordered region.

This is an uncharacterized protein from Encephalitozoon cuniculi (strain GB-M1) (Microsporidian parasite).